The primary structure comprises 74 residues: Translation initiation factor IF-1 (74 aa).

Residues 1-73 (MAKKDDIIEF…TKGRITYRGK (73 aa)) form the S1-like domain.

Belongs to the IF-1 family. In terms of assembly, component of the 30S ribosomal translation pre-initiation complex which assembles on the 30S ribosome in the order IF-2 and IF-3, IF-1 and N-formylmethionyl-tRNA(fMet); mRNA recruitment can occur at any time during PIC assembly.

The protein localises to the cytoplasm. One of the essential components for the initiation of protein synthesis. Stabilizes the binding of IF-2 and IF-3 on the 30S subunit to which N-formylmethionyl-tRNA(fMet) subsequently binds. Helps modulate mRNA selection, yielding the 30S pre-initiation complex (PIC). Upon addition of the 50S ribosomal subunit IF-1, IF-2 and IF-3 are released leaving the mature 70S translation initiation complex. The protein is Translation initiation factor IF-1 of Psychrobacter sp. (strain PRwf-1).